The chain runs to 231 residues: GTP cyclohydrolase III (231 aa).

This sequence belongs to the archaeal-type GTP cyclohydrolase family.

The enzyme catalyses GTP + 3 H2O = 2-amino-5-formylamino-6-(5-phospho-D-ribosylamino)pyrimidin-4(3H)-one + 2 phosphate + 2 H(+). Catalyzes the formation of 2-amino-5-formylamino-6-ribofuranosylamino-4(3H)-pyrimidinone ribonucleotide monophosphate and inorganic phosphate from GTP. Also has an independent pyrophosphate phosphohydrolase activity. This chain is GTP cyclohydrolase III, found in Saccharolobus solfataricus (strain ATCC 35092 / DSM 1617 / JCM 11322 / P2) (Sulfolobus solfataricus).